The following is a 154-amino-acid chain: Probable archaeosortase D (154 aa).

The next 4 membrane-spanning stretches (helical) occupy residues 6-26 (AIYI…LKML), 57-77 (IIEI…LGYI), 91-111 (YSVF…ILII), and 125-145 (VISF…IYLL). Residue Cys64 is the Acyl-thioester intermediate of the active site. Arg106 functions as the Proton donor in the catalytic mechanism.

It belongs to the exosortase/archaeosortase family. Archaeosortase D subfamily.

It localises to the cell membrane. In terms of biological role, transpeptidase that recognizes and modifies its substrate by proteolytic cleavage of a sorting signal. Following cleavage, a covalent intermediate is formed via a thioester bond between the archaeosortase and its substrate, which is then transferred and covalently attached to the cell membrane. In Methanocaldococcus jannaschii (strain ATCC 43067 / DSM 2661 / JAL-1 / JCM 10045 / NBRC 100440) (Methanococcus jannaschii), this protein is Probable archaeosortase D.